Reading from the N-terminus, the 187-residue chain is Protein TfaD (187 aa).

It in the C-terminal section; belongs to the tfa family.

This is Protein TfaD (tfaD) from Escherichia coli (strain K12).